A 49-amino-acid polypeptide reads, in one-letter code: uncharacterized protein (49 aa).

This is an uncharacterized protein from Archaeoglobus fulgidus (strain ATCC 49558 / DSM 4304 / JCM 9628 / NBRC 100126 / VC-16).